We begin with the raw amino-acid sequence, 559 residues long: Poly [ADP-ribose] polymerase 2 (559 aa).

The disordered stretch occupies residues 1-58 (MAPRRQRSGSGRRVLNEAKKVDNGNKATEDDSPPGKKMRTCQRKGPMAGGKDADRTKD). The tract at residues 1–83 (MAPRRQRSGS…VDPECAAKLG (83 aa)) is N-terminal region (NTR). Positions 14–29 (VLNEAKKVDNGNKATE) are enriched in basic and acidic residues. Short sequence motifs (nuclear localization signal) lie at residues 19 to 20 (KK) and 33 to 39 (PPGKKMR). An N6-(ADP-ribosyl)lysine; alternate mark is found at Lys-36 and Lys-37. Residues Lys-36 and Lys-37 each carry the N6-acetyllysine; alternate modification. The WGR domain maps to 84-181 (KAHVYCEGDD…ENFEKVPGKY (98 aa)). Residues 207–324 (ESQLDLRVQE…DIEIALKLVK (118 aa)) form the PARP alpha-helical domain. A Phosphoserine modification is found at Ser-208. Residues 332-559 (HPLDQHYRNL…KIQFNFLQLW (228 aa)) form the PARP catalytic domain. Residues 404-406 (HGS), Gly-413, Arg-420, and Ser-446 each bind NAD(+). The active-site For poly [ADP-ribose] polymerase activity is Glu-534.

The protein belongs to the ARTD/PARP family. Component of a base excision repair (BER) complex, containing at least XRCC1, PARP1, POLB and LRIG3. Homo- and heterodimer with PARP1. Interacts (via the PARP catalytic domain) with HPF1. Interacts with core nucleosomes. In terms of processing, auto poly-ADP-ribosylated on serine residues, leading to dissociation of the PARP2-HPF1 complex from chromatin. Poly-ADP-ribosylated by PARP1. Acetylation reduces DNA binding and enzymatic activity. Post-translationally, proteolytically cleaved by caspase-8 (CASP8) in response to apoptosis, leading to its inactivation. Widely expressed; the highest levels were in testis followed by ovary. Expression is correlated with proliferation, with higher levels occurring during early fetal development and organogenesis and in the highly proliferative cell compartments of adult.

It localises to the nucleus. It is found in the chromosome. It catalyses the reaction NAD(+) + (ADP-D-ribosyl)n-acceptor = nicotinamide + (ADP-D-ribosyl)n+1-acceptor + H(+).. The catalysed reaction is L-seryl-[protein] + NAD(+) = O-(ADP-D-ribosyl)-L-seryl-[protein] + nicotinamide + H(+). It carries out the reaction L-aspartyl-[protein] + NAD(+) = 4-O-(ADP-D-ribosyl)-L-aspartyl-[protein] + nicotinamide. The enzyme catalyses L-glutamyl-[protein] + NAD(+) = 5-O-(ADP-D-ribosyl)-L-glutamyl-[protein] + nicotinamide. ADP-ribosyltransferase activity is regulated via an allosteric activation mechanism. In absence of activation signal, PARP2 is autoinhibited by the PARP alpha-helical domain (also named HD region), which prevents effective NAD(+)-binding. Activity is highly stimulated by signals, which unfold the PARP alpha-helical domain, relieving autoinhibition. Poly-ADP-ribosyltransferase activity is tightly regulated and PARP2 is removed from damaged chromatin following initial poly-ADP-ribosylation of chromatin to avoid prolonged residence (trapping) that has cytotoxic consequences. CHD1L promotes PARP2 removal from chromatin. Functionally, poly-ADP-ribosyltransferase that mediates poly-ADP-ribosylation of proteins and plays a key role in DNA repair. Mediates glutamate, aspartate or serine ADP-ribosylation of proteins: the ADP-D-ribosyl group of NAD(+) is transferred to the acceptor carboxyl group of target residues and further ADP-ribosyl groups are transferred to the 2'-position of the terminal adenosine moiety, building up a polymer with an average chain length of 20-30 units. Serine ADP-ribosylation of proteins constitutes the primary form of ADP-ribosylation of proteins in response to DNA damage. Mediates glutamate and aspartate ADP-ribosylation of target proteins in absence of HPF1. Following interaction with HPF1, catalyzes serine ADP-ribosylation of target proteins; HPF1 conferring serine specificity by completing the PARP2 active site. PARP2 initiates the repair of double-strand DNA breaks: recognizes and binds DNA breaks within chromatin and recruits HPF1, licensing serine ADP-ribosylation of target proteins, such as histones, thereby promoting decompaction of chromatin and the recruitment of repair factors leading to the reparation of DNA strand breaks. HPF1 initiates serine ADP-ribosylation but restricts the polymerase activity of PARP2 in order to limit the length of poly-ADP-ribose chains. Specifically mediates formation of branched poly-ADP-ribosylation. Branched poly-ADP-ribose chains are specifically recognized by some factors, such as APLF. In addition to proteins, also able to ADP-ribosylate DNA: preferentially acts on 5'-terminal phosphates at DNA strand breaks termini in nicked duplex. In Mus musculus (Mouse), this protein is Poly [ADP-ribose] polymerase 2 (Parp2).